The primary structure comprises 388 residues: Mannitol-1-phosphate 5-dehydrogenase (388 aa).

Position 5-16 (5-16 (AVHFGGGNIGRG)) interacts with NAD(+). Lys213 is a catalytic residue.

It belongs to the mannitol dehydrogenase family. As to quaternary structure, monomer.

It carries out the reaction D-mannitol 1-phosphate + NAD(+) = beta-D-fructose 6-phosphate + NADH + H(+). In terms of biological role, catalyzes the NAD(H)-dependent interconversion of D-fructose 6-phosphate and D-mannitol 1-phosphate in the mannitol metabolic pathway. In Coccidioides immitis (strain RS) (Valley fever fungus), this protein is Mannitol-1-phosphate 5-dehydrogenase.